The sequence spans 336 residues: Protein-arginine kinase (336 aa).

The region spanning 22–245 is the Phosphagen kinase C-terminal domain; it reads IVMSSRIRLA…QQIINEEMQI (224 aa). Residues 25 to 29, H83, R116, 167 to 171, and 198 to 203 each bind ATP; these read SSRIR, RASVM, and RGIYGE.

Belongs to the ATP:guanido phosphotransferase family.

The enzyme catalyses L-arginyl-[protein] + ATP = N(omega)-phospho-L-arginyl-[protein] + ADP + H(+). Its function is as follows. Catalyzes the specific phosphorylation of arginine residues in proteins. The chain is Protein-arginine kinase from Staphylococcus saprophyticus subsp. saprophyticus (strain ATCC 15305 / DSM 20229 / NCIMB 8711 / NCTC 7292 / S-41).